We begin with the raw amino-acid sequence, 347 residues long: NADH-ubiquinone oxidoreductase chain 2 (347 aa).

Transmembrane regions (helical) follow at residues 1–21 (MNPL…TIVM), 25–45 (HWLV…PVLM), 59–79 (YFLT…INLI), 96–116 (IIMT…FWVP), 122–142 (IQLS…ISIL), 150–170 (NLNL…WGGL), 201–221 (ALLN…VFML), 242–262 (TALL…GFLP), 274–294 (NSVI…YFYM), and 326–346 (LSPL…LTLL).

Belongs to the complex I subunit 2 family. Core subunit of respiratory chain NADH dehydrogenase (Complex I) which is composed of 45 different subunits. Interacts with TMEM242.

Its subcellular location is the mitochondrion inner membrane. The catalysed reaction is a ubiquinone + NADH + 5 H(+)(in) = a ubiquinol + NAD(+) + 4 H(+)(out). Core subunit of the mitochondrial membrane respiratory chain NADH dehydrogenase (Complex I) which catalyzes electron transfer from NADH through the respiratory chain, using ubiquinone as an electron acceptor. Essential for the catalytic activity and assembly of complex I. The chain is NADH-ubiquinone oxidoreductase chain 2 from Eidolon helvum (Straw-colored fruit bat).